The chain runs to 549 residues: Tigger transposable element-derived protein 7 (549 aa).

In terms of domain architecture, HTH psq-type spans 1–52 (MNKRGKYTTLNLEEKMKVLSRIEAGRSLKSVMDEFGISKSTFYDIKKNKKLI). 2 consecutive DNA-binding regions (H-T-H motif) follow at residues 28 to 48 (LKSV…IKKN) and 101 to 132 (VELQ…FRNR). An HTH CENPB-type domain is found at 68–139 (KRKRTTGAKY…RNRHAIGNRK (72 aa)). Residues 169–399 (LCLAQLYSGD…VKQITIANAW (231 aa)) enclose the DDE-1 domain. The interval 527–549 (FLKPRPHNIKDSFSGPSTSGSNH) is disordered. A compositionally biased stretch (polar residues) spans 540 to 549 (SGPSTSGSNH).

The protein belongs to the tigger transposable element derived protein family. In terms of tissue distribution, expressed in all tissues tested. Higher expression in testis and ovary.

The protein resides in the nucleus. This is Tigger transposable element-derived protein 7 (TIGD7) from Homo sapiens (Human).